We begin with the raw amino-acid sequence, 1549 residues long: ATP-binding cassette sub-family C member 9 (1549 aa).

Over 1-30 (MSLSFCGNNISSYNINDGVLQNSCFVDALN) the chain is Extracellular. N9 carries an N-linked (GlcNAc...) asparagine glycan. A helical membrane pass occupies residues 31 to 51 (LVPHVFLLFITFPILFIGWGS). The Cytoplasmic portion of the chain corresponds to 52-72 (QSSKVQIHHNTWLHFPGHNLR). A helical transmembrane segment spans residues 73-93 (WILTFALLFVHVCEIAEGIVS). The Extracellular portion of the chain corresponds to 94 to 101 (DSRRESRH). The helical transmembrane segment at 102 to 122 (LHLFMPAVMGFVATTTSIVYY) threads the bilayer. The Cytoplasmic segment spans residues 123–132 (HNIETSNFPK). The helical transmembrane segment at 133–153 (LLLALFLYWVMAFITKTIKLV) threads the bilayer. At 154-167 (KYCQSGLDISNLRF) the chain is on the extracellular side. The helical transmembrane segment at 168 to 188 (CITGMMVILNGLLMAVEINVI) threads the bilayer. The Cytoplasmic portion of the chain corresponds to 189–301 (RVRRYVFFMN…AFGRPILLSS (113 aa)). The ABC transmembrane type-1 1 domain occupies 297-597 (ILLSSTFRYL…LSTVVRFAVK (301 aa)). Residues 302–322 (TFRYLADLLGFAGPLCISGIV) form a helical membrane-spanning segment. Topologically, residues 323–350 (QRVNETQNGTNNTTGISETLSSKEFLEN) are extracellular. N326, N330, N333, and N334 each carry an N-linked (GlcNAc...) asparagine glycan. The helical transmembrane segment at 351–371 (AYVLAVLLFLALILQRTFLQA) threads the bilayer. The Cytoplasmic portion of the chain corresponds to 372–423 (SYYVTIETGINLRGALLAMIYNKILRLSTSNLSMGEMTLGQINNLVAIETNQ). The helical transmembrane segment at 424 to 444 (LMWFLFLCPNLWAMPVQIIMG) threads the bilayer. Residues 445-455 (VILLYNLLGSS) are Extracellular-facing. A helical membrane pass occupies residues 456–476 (ALVGAAVIVLLAPIQYFIATK). Residues 477–531 (LAEAQKSTLDYSTERLKKTNEILKGIKLLKLYAWEHIFCKSVEETRMKELSSLKT) lie on the Cytoplasmic side of the membrane. A helical transmembrane segment spans residues 532 to 552 (FALYTSLSIFMNAAIPIAAVL). At 553 to 571 (ATFVTHAYASGNNLKPAEA) the chain is on the extracellular side. The helical transmembrane segment at 572–592 (FASLSLFHILVTPLFLLSTVV) threads the bilayer. Residues 593–990 (RFAVKAIISV…TCWRYLTSGG (398 aa)) are Cytoplasmic-facing. Residues 672-912 (IKVTNGYFSW…DVELYEHWKT (241 aa)) form the ABC transporter 1 domain. Position 705–712 (705–712 (GQVGCGKS)) interacts with ATP. The tract at residues 944-967 (REAKAQMEDEDEEEEEEEDEDDNM) is disordered. Positions 951–966 (EDEDEEEEEEEDEDDN) are enriched in acidic residues. Residues 991 to 1011 (FFLLILMIFSKLLKHSVIVAI) traverse the membrane as a helical segment. Residues 994-1274 (LILMIFSKLL…VVRNLADLEV (281 aa)) form the ABC transmembrane type-1 2 domain. The Extracellular segment spans residues 1012–1034 (DYWLATWTSEYSINNTGKADQTY). Residues 1035 to 1055 (YVAGFSILCGAGIFLCLVTSL) form a helical membrane-spanning segment. Residues 1056-1127 (TVEWMGLTAA…TLLCLSAIGM (72 aa)) are Cytoplasmic-facing. Residues 1128–1148 (ISYATPVFLVALLPLGVAFYF) traverse the membrane as a helical segment. The Extracellular segment spans residues 1149–1245 (IQKYFRVASK…IASISGSSNS (97 aa)). Residues 1246-1266 (GLVGLGLLYALTITNYLNWVV) form a helical membrane-spanning segment. Residues 1267 to 1549 (RNLADLEVQM…LFSTLVMTNK (283 aa)) lie on the Cytoplasmic side of the membrane. The ABC transporter 2 domain occupies 1312–1546 (IKIHDLCVRY…KNGLFSTLVM (235 aa)). 1346-1353 (GRTGSGKS) is a binding site for ATP.

This sequence belongs to the ABC transporter superfamily. ABCC family. Conjugate transporter (TC 3.A.1.208) subfamily. Interacts with KCNJ11. Interacts with KCNJ8.

It is found in the membrane. In terms of biological role, subunit of ATP-sensitive potassium channels (KATP). Can form cardiac and smooth muscle-type KATP channels with KCNJ11. KCNJ11 forms the channel pore while ABCC9 is required for activation and regulation. Can form a sulfonylurea-sensitive but ATP-insensitive potassium channel with KCNJ8. This is ATP-binding cassette sub-family C member 9 (ABCC9) from Homo sapiens (Human).